The sequence spans 265 residues: MEMO1 family protein Mbar_A1422 (265 aa).

The protein belongs to the MEMO1 family.

This Methanosarcina barkeri (strain Fusaro / DSM 804) protein is MEMO1 family protein Mbar_A1422.